The chain runs to 30 residues: Truncated interleukin-1-binding protein (30 aa).

Residues 1-18 form the signal peptide; that stretch reads MSILPVIFLPIFFYSSFV.

It belongs to the interleukin-1 receptor family.

The polypeptide is Truncated interleukin-1-binding protein (Vaccinia virus (strain Copenhagen) (VACV)).